Reading from the N-terminus, the 104-residue chain is Protein Rev (104 aa).

Serine 5 is modified (phosphoserine; by host CK2). Residues 18–26 are homomultimerization; that stretch reads VIKILYQSN. The segment covering 25 to 34 has biased composition (polar residues); that stretch reads SNPYPNSKGT. Disordered regions lie at residues 25–48 and 63–104; these read SNPYPNSKGTRQARRNRRRRWRAR and CLGG…ATTE. A Nuclear localization signal and RNA-binding (RRE) motif is present at residues 34 to 50; that stretch reads TRQARRNRRRRWRARQR. The span at 35–48 shows a compositional bias: basic residues; it reads RQARRNRRRRWRAR. Over residues 67-77 the composition is skewed to pro residues; that stretch reads PPEPVDLPLPP. A Nuclear export signal and binding to XPO1 motif is present at residues 73–84; sequence LPLPPLDRLTLD. Polar residues predominate over residues 91–104; it reads TPGTESQQGTATTE.

Belongs to the HIV-1 REV protein family. In terms of assembly, homomultimer; when bound to the RRE. Multimeric assembly is essential for activity and may involve XPO1. Binds to human KPNB1, XPO1, TNPO1, RANBP5 and IPO7. Interacts with the viral Integrase. Interacts with human KHDRBS1. Interacts with human NAP1; this interaction decreases Rev multimerization and stimulates its activity. Interacts with human DEAD-box helicases DDX3 and DDX24; these interactions may serve for viral RNA export to the cytoplasm and packaging, respectively. Interacts with human PSIP1; this interaction may inhibit HIV-1 DNA integration by promoting dissociation of the Integrase-LEDGF/p75 complex. Asymmetrically arginine dimethylated at one site by host PRMT6. Methylation impairs the RNA-binding activity and export of viral RNA from the nucleus to the cytoplasm. Post-translationally, phosphorylated by protein kinase CK2. Presence of, and maybe binding to the N-terminus of the regulatory beta subunit of CK2 is necessary for CK2-mediated Rev's phosphorylation.

It localises to the host nucleus. The protein resides in the host nucleolus. The protein localises to the host cytoplasm. Escorts unspliced or incompletely spliced viral pre-mRNAs (late transcripts) out of the nucleus of infected cells. These pre-mRNAs carry a recognition sequence called Rev responsive element (RRE) located in the env gene, that is not present in fully spliced viral mRNAs (early transcripts). This function is essential since most viral proteins are translated from unspliced or partially spliced pre-mRNAs which cannot exit the nucleus by the pathway used by fully processed cellular mRNAs. Rev itself is translated from a fully spliced mRNA that readily exits the nucleus. Rev's nuclear localization signal (NLS) binds directly to KPNB1/Importin beta-1 without previous binding to KPNA1/Importin alpha-1. KPNB1 binds to the GDP bound form of RAN (Ran-GDP) and targets Rev to the nucleus. In the nucleus, the conversion from Ran-GDP to Ran-GTP dissociates Rev from KPNB1 and allows Rev's binding to the RRE in viral pre-mRNAs. Rev multimerization on the RRE via cooperative assembly exposes its nuclear export signal (NES) to the surface. Rev can then form a complex with XPO1/CRM1 and Ran-GTP, leading to nuclear export of the complex. Conversion from Ran-GTP to Ran-GDP mediates dissociation of the Rev/RRE/XPO1/RAN complex, so that Rev can return to the nucleus for a subsequent round of export. Beside KPNB1, also seems to interact with TNPO1/Transportin-1, RANBP5/IPO5 and IPO7/RANBP7 for nuclear import. The nucleoporin-like HRB/RIP is an essential cofactor that probably indirectly interacts with Rev to release HIV RNAs from the perinuclear region to the cytoplasm. The protein is Protein Rev of Human immunodeficiency virus type 1 group N (isolate YBF30) (HIV-1).